The sequence spans 10746 residues: Extracellular matrix-binding protein ebh (10746 aa).

The signal sequence occupies residues 1–39; it reads MNYRDKIQKFSIRKYTVGTFSTVIATLVFLGLNTSQAQA. 2 stretches are compositionally biased toward polar residues: residues 41 to 59 and 67 to 113; these read ETNQ…GDTQ and VQNS…SQNE. Disordered stretches follow at residues 41 to 174, 246 to 274, and 1340 to 1372; these read ETNQ…GNVQ, MPQR…PRSV, and IAGN…DGQR. Positions 120 to 130 are enriched in low complexity; it reads AAATPTQSAKA. Over residues 132 to 158 the composition is skewed to basic and acidic residues; that stretch reads SKHEQSESRAANKKENDNKATHVESHE. The span at 162–173 shows a compositional bias: polar residues; the sequence is VTASDSSDSGNV. Low complexity predominate over residues 248 to 263; sequence QRQQTSRRSSRIQTRS. Polar residues predominate over residues 1356–1372; that stretch reads YKTTGYSQSNPTSDGQR. 59 consecutive FIVAR domains span residues 2520–2576, 2606–2662, 2683–2746, 2776–2832, 2860–2915, 2943–2998, 3026–3081, 3150–3208, 3276–3335, 3403–3461, 3529–3587, 3655–3713, 3781–3839, 3907–3965, 4033–4091, 4159–4217, 4285–4343, 4411–4469, 4537–4595, 4663–4721, 4789–4847, 4915–4973, 5041–5099, 5167–5225, 5293–5351, 5419–5477, 5545–5603, 5671–5729, 5797–5855, 5923–5981, 6049–6107, 6175–6232, 6300–6358, 6426–6484, 6552–6610, 6678–6736, 6804–6862, 6930–6988, 7056–7114, 7182–7240, 7308–7366, 7434–7492, 7560–7618, 7686–7744, 7812–7870, 7938–7996, 8064–8125, 8190–8251, 8316–8374, 8442–8500, 8568–8625, 8693–8751, 8819–8877, 8945–9003, 9071–9129, 9197–9255, 9323–9377, 9445–9504, and 9699–9755; these read AKNH…VNAA, SKNN…ISDE, DTHE…VQTA, AKTK…IAAK, AKTQ…IRQN, AKNQ…INTN, AKTQ…INDK, AMTK…VNQK, AMTG…VNNA, AMGN…VNSA, AMGN…VTEA, AMNT…ITQK, AMAS…VEAA, AMGN…VEQA, AMGQ…VTAA, AMKG…ITQA, QMGN…VEAA, AMAN…VENA, AMGT…INQI, AMGQ…VDRA, AMNS…VDNA, AMGA…INGM, AMTV…VNSA, AMHS…VEQA, AMGQ…VERA, AMTA…VTNA, AMKG…INQA, AMTN…VESA, AMSN…VEQA, AMNQ…INQK, AMGN…VQAA, AMGQ…VEAA, AMQR…VEQA, AMDQ…VTAA, AMNQ…VTQA, AMER…VEAA, AMGN…VEAA, AMDK…INQA, AMTQ…ITAA, AMTQ…IQQA, AMTN…VEQA, AMTQ…VAQA, AMGT…VTQA, AMSN…ITRA, AMDQ…ITNE, AMEL…VNRA, AMHG…INQA, LMDA…VTSA, AMKA…IDQA, AMEA…VEQL, AMQA…VEQL, AMET…VDQA, SMDQ…VDQA, VMDQ…VIKL, and AMET…INGA. A compositionally biased stretch (polar residues) spans 7066 to 7080; sequence DNATTKQNQNYTDSS. The segment at 7066–7085 is disordered; it reads DNATTKQNQNYTDSSPNKKD. The span at 10492-10507 shows a compositional bias: polar residues; that stretch reads DHSKPSSNSDGQSNSH. Residues 10492–10530 form a disordered region; sequence DHSKPSSNSDGQSNSHLHVGYGTVNHPFNSSPIGHKKKL. A helical transmembrane segment spans residues 10552–10572; that stretch reads IKNALGVVGISGLLASFWFFI. The tract at residues 10649-10746 is disordered; that stretch reads RRKEDEEDVE…KKKKSKKNKK (98 aa). The span at 10664 to 10674 shows a compositional bias: basic and acidic residues; the sequence is TDEKVLQDNEH. The segment covering 10719–10746 has biased composition (basic residues); sequence KGKKSASKKPSKKVAAKKKKKKSKKNKK.

Its subcellular location is the cell membrane. The polypeptide is Extracellular matrix-binding protein ebh (ebh) (Staphylococcus aureus (strain MRSA252)).